A 59-amino-acid chain; its full sequence is Large ribosomal subunit protein uL30 (59 aa).

This sequence belongs to the universal ribosomal protein uL30 family. As to quaternary structure, part of the 50S ribosomal subunit.

This Citrifermentans bemidjiense (strain ATCC BAA-1014 / DSM 16622 / JCM 12645 / Bem) (Geobacter bemidjiensis) protein is Large ribosomal subunit protein uL30.